We begin with the raw amino-acid sequence, 369 residues long: Saccharopine dehydrogenase [NAD(+), L-lysine-forming] (369 aa).

Positions 19 and 78 each coordinate L-saccharopine. The active-site Proton acceptor is the Lys-78. The Proton donor role is filled by His-96. Gln-101 is an L-saccharopine binding site. Arg-130 serves as a coordination point for NAD(+). Arg-131 and Phe-135 together coordinate L-saccharopine. NAD(+) is bound by residues 203–204, Asp-227, Thr-231, Tyr-251, and Val-278; that span reads GR. Residues Cys-205 and Cys-249 are joined by a disulfide bond. An L-saccharopine-binding site is contributed by 279 to 281; the sequence is SAD. 318–321 lines the NAD(+) pocket; the sequence is IDHL.

It belongs to the AlaDH/PNT family. Monomer.

It catalyses the reaction L-saccharopine + NAD(+) + H2O = L-lysine + 2-oxoglutarate + NADH + H(+). The protein operates within amino-acid biosynthesis; L-lysine biosynthesis via AAA pathway; L-lysine from L-alpha-aminoadipate (fungal route): step 3/3. Catalyzes the NAD(+)-dependent cleavage of saccharopine to L-lysine and 2-oxoglutarate, the final step in the alpha-aminoadipate (AAA) pathway for lysin biosynthesis. This is Saccharopine dehydrogenase [NAD(+), L-lysine-forming] from Yarrowia lipolytica (strain CLIB 122 / E 150) (Yeast).